Reading from the N-terminus, the 229-residue chain is MGGILKNPLALSPEQLAQQDPETLEEFRRQVYENTQKNAKLTSHKRNIPGLDNTKEEGEIIGTSSTFLPKDTLSLKHEQDMLAKMTPEERVQWNQRNLAENEITKKQFQDIHIDEPKTPYQGAVDPHGEYYRVDDDEDEDNSDKKPCQVANDDIDDLSLGEPEFEIKENKQPDFETNDENDEDSPEARHKKFEEMRKKHYDVRAIFNKKSREALKDEDEDEDDSTTKEP.

3 disordered regions span residues 1 to 21 (MGGI…QQDP), 35 to 62 (TQKN…EIIG), and 107 to 229 (QFQD…TKEP). At serine 12 the chain carries Phosphoserine. The span at 107–117 (QFQDIHIDEPK) shows a compositional bias: basic and acidic residues. Threonine 118 carries the post-translational modification Phosphothreonine; by PHO85. The residue at position 158 (serine 158) is a Phosphoserine. A compositionally biased stretch (basic and acidic residues) spans 164–173 (FEIKENKQPD). Residues 175–184 (ETNDENDEDS) show a composition bias toward acidic residues. Serine 184 bears the Phosphoserine mark. The span at 185 to 196 (PEARHKKFEEMR) shows a compositional bias: basic and acidic residues.

Post-translationally, phosphorylated by the cyclin-CDKs PCL6-PHO85 and PCL7-PHO85. Phosphorylation of Thr-118 inactivates GLC8.

Its function is as follows. Modulator of GLC7 type-1 protein phosphatase. In Saccharomyces cerevisiae (strain ATCC 204508 / S288c) (Baker's yeast), this protein is Protein GLC8 (GLC8).